A 344-amino-acid chain; its full sequence is Ribosomal RNA large subunit methyltransferase Cfr (344 aa).

Catalysis depends on Glu-90, which acts as the Proton acceptor. A Radical SAM core domain is found at 97-330 (KQGWESFCIS…ATVRTQFGSE (234 aa)). Residues Cys-104 and Cys-335 are joined by a disulfide bond. Residues Cys-111, Cys-115, and Cys-118 each coordinate [4Fe-4S] cluster. Residues 157 to 158 (GE), Ser-188, 211 to 213 (SLH), and Asn-292 each bind S-adenosyl-L-methionine. The S-methylcysteine intermediate role is filled by Cys-335.

Belongs to the radical SAM superfamily. RlmN family. Cfr subfamily. It depends on [4Fe-4S] cluster as a cofactor.

The protein resides in the cytoplasm. It catalyses the reaction adenosine(2503) in 23S rRNA + 2 reduced [2Fe-2S]-[ferredoxin] + 2 S-adenosyl-L-methionine = 8-methyladenosine(2503) in 23S rRNA + 5'-deoxyadenosine + L-methionine + 2 oxidized [2Fe-2S]-[ferredoxin] + S-adenosyl-L-homocysteine. Its function is as follows. Specifically methylates position 8 of adenine 2503 in 23S rRNA. Confers resistance to some classes of antibiotics. This is Ribosomal RNA large subunit methyltransferase Cfr from Clostridium botulinum (strain Hall / ATCC 3502 / NCTC 13319 / Type A).